The primary structure comprises 501 residues: Pentatricopeptide repeat-containing protein At2g36730 (501 aa).

PPR repeat units follow at residues 77–111 (TPST…GIKP), 112–146 (NKLT…GFDF), 147–177 (DVYV…MTER), 178–212 (NVVS…RFCP), 213–243 (DETT…VREL), 246–276 (NCRL…MVDK), 277–312 (NVWT…SVRP), 313–343 (NYVT…MEKI), and 349–379 (MMIH…MPFE). The type E motif stretch occupies residues 384–462 (VWRTLLSACS…IAGESCLELG (79 aa)). A type E(+) motif region spans residues 463 to 493 (GSFHRFFSGYDPRSEYVSIYELLDLFKFQLT).

Belongs to the PPR family. PCMP-E subfamily.

This is Pentatricopeptide repeat-containing protein At2g36730 (PCMP-E44) from Arabidopsis thaliana (Mouse-ear cress).